Consider the following 388-residue polypeptide: Acyl-CoA dehydrogenase fadE12 (388 aa).

The protein belongs to the acyl-CoA dehydrogenase family. Requires FAD as cofactor.

The enzyme catalyses a 2,3-saturated acyl-CoA + A = a 2,3-dehydroacyl-CoA + AH2. This is Acyl-CoA dehydrogenase fadE12 (fadE12) from Mycobacterium tuberculosis (strain CDC 1551 / Oshkosh).